The chain runs to 939 residues: Translation initiation factor IF-2 (939 aa).

Residues 57–274 are disordered; it reads RLKPAAPAAP…APTKKNEQKI (218 aa). Basic and acidic residues-rich tracts occupy residues 83-122 and 129-138; these read MEPK…KESV and LEQEPPKEEL. Composition is skewed to polar residues over residues 146–158 and 170–180; these read ESAS…SNPL and VATTLATQTDA. Residues 208–227 are compositionally biased toward basic and acidic residues; that stretch reads KRSEEPAPKADRPSLEEART. Residues 252–262 show a composition bias toward basic residues; that stretch reads ARKKKKEKKKP. One can recognise a tr-type G domain in the interval 438–607; the sequence is ERPPVVTIMG…LVQSELLELK (170 aa). The segment at 447–454 is G1; sequence GHVDHGKT. 447–454 is a GTP binding site; it reads GHVDHGKT. Residues 472–476 form a G2 region; that stretch reads GITQH. Positions 493–496 are G3; the sequence is DTPG. GTP-binding positions include 493–497 and 547–550; these read DTPGH and NKVD. The interval 547–550 is G4; that stretch reads NKVD. A G5 region spans residues 583–585; sequence SAK.

The protein belongs to the TRAFAC class translation factor GTPase superfamily. Classic translation factor GTPase family. IF-2 subfamily.

It is found in the cytoplasm. One of the essential components for the initiation of protein synthesis. Protects formylmethionyl-tRNA from spontaneous hydrolysis and promotes its binding to the 30S ribosomal subunits. Also involved in the hydrolysis of GTP during the formation of the 70S ribosomal complex. In Wolinella succinogenes (strain ATCC 29543 / DSM 1740 / CCUG 13145 / JCM 31913 / LMG 7466 / NCTC 11488 / FDC 602W) (Vibrio succinogenes), this protein is Translation initiation factor IF-2.